The chain runs to 126 residues: Aspartate 1-decarboxylase (126 aa).

Serine 25 (schiff-base intermediate with substrate; via pyruvic acid) is an active-site residue. Serine 25 carries the pyruvic acid (Ser) modification. Threonine 57 provides a ligand contact to substrate. Tyrosine 58 functions as the Proton donor in the catalytic mechanism. 73–75 (GGA) is a substrate binding site.

The protein belongs to the PanD family. As to quaternary structure, heterooctamer of four alpha and four beta subunits. Pyruvate is required as a cofactor. In terms of processing, is synthesized initially as an inactive proenzyme, which is activated by self-cleavage at a specific serine bond to produce a beta-subunit with a hydroxyl group at its C-terminus and an alpha-subunit with a pyruvoyl group at its N-terminus.

The protein localises to the cytoplasm. It catalyses the reaction L-aspartate + H(+) = beta-alanine + CO2. It functions in the pathway cofactor biosynthesis; (R)-pantothenate biosynthesis; beta-alanine from L-aspartate: step 1/1. Its function is as follows. Catalyzes the pyruvoyl-dependent decarboxylation of aspartate to produce beta-alanine. The polypeptide is Aspartate 1-decarboxylase (Xylella fastidiosa (strain 9a5c)).